We begin with the raw amino-acid sequence, 116 residues long: MNHYSFSSLIRAFIPLSLVIVSAAWQPAALADTRHIIVDSGDSTLSKEAARQSKEQWDSTRSLRNKVNNRVEKEFDKTEKAIDGREKCNASYNVNAYWENTTDRCLDRRTGRPVTP.

A signal peptide spans 1 to 31 (MNHYSFSSLIRAFIPLSLVIVSAAWQPAALA).

The protein belongs to the UPF0482 family.

The sequence is that of UPF0482 protein PC1_2049 from Pectobacterium carotovorum subsp. carotovorum (strain PC1).